The sequence spans 128 residues: Sulfurtransferase TusD (128 aa).

The active-site Cysteine persulfide intermediate is Cys-78.

Belongs to the DsrE/TusD family. Heterohexamer, formed by a dimer of trimers. The hexameric TusBCD complex contains 2 copies each of TusB, TusC and TusD. The TusBCD complex interacts with TusE.

The protein localises to the cytoplasm. Its function is as follows. Part of a sulfur-relay system required for 2-thiolation of 5-methylaminomethyl-2-thiouridine (mnm(5)s(2)U) at tRNA wobble positions. Accepts sulfur from TusA and transfers it in turn to TusE. This chain is Sulfurtransferase TusD, found in Shigella boydii serotype 18 (strain CDC 3083-94 / BS512).